We begin with the raw amino-acid sequence, 320 residues long: GDP-L-fucose synthase (320 aa).

14-20 (GGSGLVG) is a binding site for NADP(+). Tyr142 (proton donor/acceptor) is an active-site residue. NADP(+)-binding positions include Lys146, 169–172 (PTNI), and His185. Lys193, Arg214, and Asp276 together coordinate substrate.

It belongs to the NAD(P)-dependent epimerase/dehydratase family. Fucose synthase subfamily.

The enzyme catalyses GDP-beta-L-fucose + NADP(+) = GDP-4-dehydro-alpha-D-rhamnose + NADPH + H(+). Its pathway is nucleotide-sugar biosynthesis; GDP-L-fucose biosynthesis via de novo pathway; GDP-L-fucose from GDP-alpha-D-mannose: step 2/2. In terms of biological role, catalyzes the two-step NADP-dependent conversion of GDP-4-dehydro-6-deoxy-D-mannose to GDP-fucose, involving an epimerase and a reductase reaction. The sequence is that of GDP-L-fucose synthase (ger) from Dictyostelium discoideum (Social amoeba).